Here is a 641-residue protein sequence, read N- to C-terminus: Leucine-rich repeat protein soc-2 homolog (641 aa).

Residues 1-19 (MNLCSSGATASTTSLSSTG) are compositionally biased toward low complexity. The interval 1–146 (MNLCSSGATA…TTKKSKPIQA (146 aa)) is disordered. Residues 24 to 56 (SGGGGVAGGGGISNGGGGGGGVTGSGGGGGGNT) are compositionally biased toward gly residues. Residues 96 to 106 (GAQQPSGSNGQ) show a composition bias toward low complexity. LRR repeat units lie at residues 161–182 (GIKR…VKDC), 184–205 (QITE…IGCL), 207–228 (NLRN…LQNC), 230–251 (QLKV…IYRL), 253–274 (SLTT…LRQL), 276–297 (NLTM…IGAL), 299–320 (NLTT…IGNC), 322–343 (NLSA…IGNL), 345–367 (SLVR…KNCK), 368–389 (CMDE…MLAS), 392–413 (GLTT…GPAQ), 416–437 (NVYS…IFSR), 440–461 (GLTK…IGTW), 463–484 (NMVE…IMNL), 486–507 (NLEI…IGNL), 509–530 (RLRI…IGLL), 532–553 (ELQR…IGHL), 555–576 (NLTH…IGSL), 578–600 (SLEN…LALC), and 602–623 (NLKY…IQAG).

Belongs to the SHOC2 family.

In terms of biological role, acts as a Ras effector and participates in MAPK pathway activation. Probably acts as a regulatory subunit of protein phosphatase that specifically dephosphorylates Raf kinase and stimulate Raf activity at specialized signaling complexes upon Ras activation. This is Leucine-rich repeat protein soc-2 homolog (Sur-8) from Drosophila ananassae (Fruit fly).